The following is a 72-amino-acid chain: Translation initiation factor IF-1 2 (72 aa).

The 72-residue stretch at 1–72 folds into the S1-like domain; sequence MAKEDTIQMQ…SRARIVFRAK (72 aa).

The protein belongs to the IF-1 family. As to quaternary structure, component of the 30S ribosomal translation pre-initiation complex which assembles on the 30S ribosome in the order IF-2 and IF-3, IF-1 and N-formylmethionyl-tRNA(fMet); mRNA recruitment can occur at any time during PIC assembly.

It localises to the cytoplasm. Functionally, one of the essential components for the initiation of protein synthesis. Stabilizes the binding of IF-2 and IF-3 on the 30S subunit to which N-formylmethionyl-tRNA(fMet) subsequently binds. Helps modulate mRNA selection, yielding the 30S pre-initiation complex (PIC). Upon addition of the 50S ribosomal subunit IF-1, IF-2 and IF-3 are released leaving the mature 70S translation initiation complex. This Chromobacterium violaceum (strain ATCC 12472 / DSM 30191 / JCM 1249 / CCUG 213 / NBRC 12614 / NCIMB 9131 / NCTC 9757 / MK) protein is Translation initiation factor IF-1 2.